The primary structure comprises 405 residues: Formate-dependent phosphoribosylglycinamide formyltransferase (405 aa).

N(1)-(5-phospho-beta-D-ribosyl)glycinamide is bound by residues 22-23 (EL) and glutamate 82. ATP is bound by residues arginine 115, lysine 162, 167–172 (SSGKGQ), 202–205 (EGFI), and glutamate 210. In terms of domain architecture, ATP-grasp spans 120–320 (RLAAETLGLA…EFELHARAIL (201 aa)). Mg(2+) contacts are provided by glutamate 279 and glutamate 291. N(1)-(5-phospho-beta-D-ribosyl)glycinamide-binding positions include aspartate 298, lysine 367, and 374-375 (RR).

This sequence belongs to the PurK/PurT family. Homodimer.

The enzyme catalyses N(1)-(5-phospho-beta-D-ribosyl)glycinamide + formate + ATP = N(2)-formyl-N(1)-(5-phospho-beta-D-ribosyl)glycinamide + ADP + phosphate + H(+). It functions in the pathway purine metabolism; IMP biosynthesis via de novo pathway; N(2)-formyl-N(1)-(5-phospho-D-ribosyl)glycinamide from N(1)-(5-phospho-D-ribosyl)glycinamide (formate route): step 1/1. In terms of biological role, involved in the de novo purine biosynthesis. Catalyzes the transfer of formate to 5-phospho-ribosyl-glycinamide (GAR), producing 5-phospho-ribosyl-N-formylglycinamide (FGAR). Formate is provided by PurU via hydrolysis of 10-formyl-tetrahydrofolate. The polypeptide is Formate-dependent phosphoribosylglycinamide formyltransferase (Delftia acidovorans (strain DSM 14801 / SPH-1)).